A 496-amino-acid chain; its full sequence is Probable malate:quinone oxidoreductase (496 aa).

This sequence belongs to the MQO family. FAD is required as a cofactor.

The enzyme catalyses (S)-malate + a quinone = a quinol + oxaloacetate. Its pathway is carbohydrate metabolism; tricarboxylic acid cycle; oxaloacetate from (S)-malate (quinone route): step 1/1. In Flavobacterium psychrophilum (strain ATCC 49511 / DSM 21280 / CIP 103535 / JIP02/86), this protein is Probable malate:quinone oxidoreductase.